Here is a 488-residue protein sequence, read N- to C-terminus: 3-octaprenyl-4-hydroxybenzoate carboxy-lyase (488 aa).

Asn-172 contacts Mn(2+). Residues 175 to 177, 189 to 191, and 194 to 195 contribute to the prenylated FMN site; these read IYR, RWL, and RG. Position 238 (Glu-238) interacts with Mn(2+). Asp-287 acts as the Proton donor in catalysis.

This sequence belongs to the UbiD family. In terms of assembly, homohexamer. It depends on prenylated FMN as a cofactor. Mn(2+) serves as cofactor.

The protein resides in the cell membrane. The enzyme catalyses a 4-hydroxy-3-(all-trans-polyprenyl)benzoate + H(+) = a 2-(all-trans-polyprenyl)phenol + CO2. Its pathway is cofactor biosynthesis; ubiquinone biosynthesis. Functionally, catalyzes the decarboxylation of 3-octaprenyl-4-hydroxy benzoate to 2-octaprenylphenol, an intermediate step in ubiquinone biosynthesis. The chain is 3-octaprenyl-4-hydroxybenzoate carboxy-lyase from Pseudomonas paraeruginosa (strain DSM 24068 / PA7) (Pseudomonas aeruginosa (strain PA7)).